Consider the following 512-residue polypeptide: 2-isopropylmalate synthase (512 aa).

The region spanning 4–266 (IQFFDTTLRD…ETNIVLNQFK (263 aa)) is the Pyruvate carboxyltransferase domain. Mn(2+) contacts are provided by Asp13, His201, His203, and Asn237. The tract at residues 390–512 (ELKHLQVQYV…SKQADFEEVK (123 aa)) is regulatory domain.

The protein belongs to the alpha-IPM synthase/homocitrate synthase family. LeuA type 1 subfamily. As to quaternary structure, homodimer. Mn(2+) serves as cofactor.

Its subcellular location is the cytoplasm. It carries out the reaction 3-methyl-2-oxobutanoate + acetyl-CoA + H2O = (2S)-2-isopropylmalate + CoA + H(+). Its pathway is amino-acid biosynthesis; L-leucine biosynthesis; L-leucine from 3-methyl-2-oxobutanoate: step 1/4. Catalyzes the condensation of the acetyl group of acetyl-CoA with 3-methyl-2-oxobutanoate (2-ketoisovalerate) to form 3-carboxy-3-hydroxy-4-methylpentanoate (2-isopropylmalate). The protein is 2-isopropylmalate synthase of Listeria monocytogenes serotype 4a (strain HCC23).